We begin with the raw amino-acid sequence, 206 residues long: Ribosomal RNA small subunit methyltransferase G (206 aa).

Residues Gly73, Leu78, 124–125 (VE), and Arg139 each bind S-adenosyl-L-methionine.

This sequence belongs to the methyltransferase superfamily. RNA methyltransferase RsmG family.

It is found in the cytoplasm. It carries out the reaction guanosine(527) in 16S rRNA + S-adenosyl-L-methionine = N(7)-methylguanosine(527) in 16S rRNA + S-adenosyl-L-homocysteine. Specifically methylates the N7 position of guanine in position 527 of 16S rRNA. The protein is Ribosomal RNA small subunit methyltransferase G of Idiomarina loihiensis (strain ATCC BAA-735 / DSM 15497 / L2-TR).